The sequence spans 920 residues: Rho GTPase-activating protein REN1 (920 aa).

Residues 1-10 (MANKNAESSS) are compositionally biased toward polar residues. The segment at 1–64 (MANKNAESSS…SRGGNTVFKS (64 aa)) is disordered. Residues 17–31 (QPNQQQQQQPPIANE) are compositionally biased toward low complexity. Positions 45-64 (PAQSGNTDSRSRGGNTVFKS) are enriched in polar residues. The 108-residue stretch at 60–167 (TVFKSGPLSI…WKAALENALT (108 aa)) folds into the PH domain. The Rho-GAP domain maps to 213 to 412 (LALEDVDGAP…TLLEEYESIF (200 aa)). 3 disordered regions span residues 417–592 (LSPG…NLSM), 719–825 (RLGH…ALSK), and 837–920 (RSQI…TFSR). Acidic residues predominate over residues 434-463 (EGSDDEEYDDDDDGSQGSEDYTDEEEDLEN). Residues 464–473 (ESNGSYSESA) are compositionally biased toward polar residues. 3 stretches are compositionally biased toward basic and acidic residues: residues 475–491 (SEDKYADSIDPDDHKIN), 499–509 (KSPKRSKEPKK), and 520–532 (PRHDDGKKDEDIV). The span at 555–568 (SSTSDVASDTQKPS) shows a compositional bias: polar residues. The segment covering 577–586 (SKRHWGRTPG) has biased composition (basic residues). The stretch at 598–728 (SVEVDEDNAD…RLGHHDGKAS (131 aa)) forms a coiled coil. Basic and acidic residues-rich tracts occupy residues 734 to 768 (ASKESRKLPEHNAKMKEKQKDTEAASTHISERSTS) and 776 to 788 (RENETEKQQDSRS). Low complexity predominate over residues 814–825 (EGSTTTTSALSK). 2 stretches are compositionally biased toward polar residues: residues 854 to 864 (GQPSPTSGQNR) and 872 to 885 (GSGSNQDPDSSKLQ). The segment covering 889–903 (ILDRGRSENGGDRGR) has biased composition (basic and acidic residues). Positions 910-920 (HPNTTPRTFSR) are enriched in polar residues.

Interacts with ARAC11/ROP1. Expressed in pollen and pollen tubes.

It localises to the cell membrane. Functionally, acts as a GTPase activator for the Rac-type GTPase by converting it to an inactive GDP-bound state. Maintains the global inactivation of ARAC11/ROP1 at the apex in pollen tubes in order to regulate the polar cell growth. This Arabidopsis thaliana (Mouse-ear cress) protein is Rho GTPase-activating protein REN1 (REN1).